A 575-amino-acid chain; its full sequence is Glycosyltransferase family 92 protein At1g27200 (575 aa).

The chain crosses the membrane as a helical span at residues 22 to 44; it reads FLSQRYLILCFCCFFVLLFFLSS. The GT92 domain occupies 293–540; that stretch reads LCVCTMLWNQ…TEAIEPPDWK (248 aa).

Belongs to the glycosyltransferase 92 family.

The protein resides in the membrane. In Arabidopsis thaliana (Mouse-ear cress), this protein is Glycosyltransferase family 92 protein At1g27200.